A 355-amino-acid polypeptide reads, in one-letter code: Type II restriction enzyme CfrBI (355 aa).

The catalysed reaction is Endonucleolytic cleavage of DNA to give specific double-stranded fragments with terminal 5'-phosphates.. Functionally, a P subtype restriction enzyme that recognizes the double-stranded sequence 5'-CCWWGG-3' and cleaves after C-1. The sequence is that of Type II restriction enzyme CfrBI from Citrobacter freundii.